The sequence spans 455 residues: Glutamyl-tRNA(Gln) amidotransferase subunit A (455 aa).

Active-site charge relay system residues include K74 and S149. Residue S173 is the Acyl-ester intermediate of the active site.

It belongs to the amidase family. GatA subfamily. In terms of assembly, heterotrimer of A, B and C subunits.

It catalyses the reaction L-glutamyl-tRNA(Gln) + L-glutamine + ATP + H2O = L-glutaminyl-tRNA(Gln) + L-glutamate + ADP + phosphate + H(+). Allows the formation of correctly charged Gln-tRNA(Gln) through the transamidation of misacylated Glu-tRNA(Gln) in organisms which lack glutaminyl-tRNA synthetase. The reaction takes place in the presence of glutamine and ATP through an activated gamma-phospho-Glu-tRNA(Gln). The protein is Glutamyl-tRNA(Gln) amidotransferase subunit A of Methanosphaera stadtmanae (strain ATCC 43021 / DSM 3091 / JCM 11832 / MCB-3).